The following is a 67-amino-acid chain: UPF0337 protein BCE_3655 (67 aa).

Belongs to the UPF0337 (CsbD) family.

This is UPF0337 protein BCE_3655 from Bacillus cereus (strain ATCC 10987 / NRS 248).